Reading from the N-terminus, the 395-residue chain is 8-amino-7-oxononanoate synthase/2-amino-3-ketobutyrate coenzyme A ligase (395 aa).

Residue 110-111 (GF) coordinates pyridoxal 5'-phosphate. Position 135 (His135) interacts with substrate. Residues Ser182, 207 to 210 (DDAH), and 239 to 242 (TLSK) each bind pyridoxal 5'-phosphate. Position 242 is an N6-(pyridoxal phosphate)lysine (Lys242). Thr356 contributes to the substrate binding site.

Belongs to the class-II pyridoxal-phosphate-dependent aminotransferase family. Homodimer. Requires pyridoxal 5'-phosphate as cofactor.

It carries out the reaction 6-carboxyhexanoyl-[ACP] + L-alanine + H(+) = (8S)-8-amino-7-oxononanoate + holo-[ACP] + CO2. The catalysed reaction is glycine + acetyl-CoA = (2S)-2-amino-3-oxobutanoate + CoA. Its pathway is cofactor biosynthesis; biotin biosynthesis. Its function is as follows. Catalyzes the decarboxylative condensation of pimeloyl-[acyl-carrier protein] and L-alanine to produce 8-amino-7-oxononanoate (AON), [acyl-carrier protein], and carbon dioxide. Can also use pimeloyl-CoA instead of pimeloyl-ACP as substrate. It also converts 2-amino-3-ketobutyrate and CoA to glycine and acetyl-CoA. Activity is also observed with the following combinations of substrates: acetyl-CoA and either L-alanine or L-serine, pimeloyl-CoA and either glycine or L-serine, and palmitoyl-CoA with L-alanine. This chain is 8-amino-7-oxononanoate synthase/2-amino-3-ketobutyrate coenzyme A ligase, found in Thermus thermophilus (strain ATCC 27634 / DSM 579 / HB8).